The chain runs to 86 residues: UPF0335 protein mll3968 (86 aa).

The protein belongs to the UPF0335 family.

The sequence is that of UPF0335 protein mll3968 from Mesorhizobium japonicum (strain LMG 29417 / CECT 9101 / MAFF 303099) (Mesorhizobium loti (strain MAFF 303099)).